The sequence spans 342 residues: MKAKDIVLKKSEKIEGVEVKGPWLDDAQSLEEVVSYYYRIGFQATHLGRAIEIWRKVEEKRERGEEIRVFLGYTSNIISSGLREIIAWLVKEKKVDVIVTTAGGVEEDFIKSLKPFILGDWEVDDAELRKKGVNRIGNIFVPNDRYIEFEKYMIPFFERVLKIEEKLSRPLTASEFIYEMGRYMDEKLGKEKEKSVIYWAYKNNIPIFCPAITDGSIGDMLYFFKEERRDSRLIIDIANDIVKLNNLAITAKETASIILGGSLPKHAIINANLFRGGTDYAIYISTAVPWDGSLSGAPPREGVSWGKIKAKADYVEVWGDATLIFPILVWMVMKARGQGYAQ.

Residue lysine 307 is the Nucleophile of the active site.

It belongs to the deoxyhypusine synthase family. Requires NAD(+) as cofactor.

It carries out the reaction [eIF5A protein]-L-lysine + spermidine = [eIF5A protein]-deoxyhypusine + propane-1,3-diamine. It functions in the pathway protein modification; eIF5A hypusination. In terms of biological role, catalyzes the NAD-dependent oxidative cleavage of spermidine and the subsequent transfer of the butylamine moiety of spermidine to the epsilon-amino group of a specific lysine residue of the eIF-5A precursor protein to form the intermediate deoxyhypusine residue. This is Probable deoxyhypusine synthase (dys) from Pyrococcus horikoshii (strain ATCC 700860 / DSM 12428 / JCM 9974 / NBRC 100139 / OT-3).